The following is a 221-amino-acid chain: Leucine rich adaptor protein 1-like (221 aa).

Met1 bears the N-acetylmethionine mark. Residues 1 to 81 (MEDGPLPDLR…SGSPRRSHPS (81 aa)) form a disordered region. Basic and acidic residues-rich tracts occupy residues 8–21 (DLRD…RKVP) and 28–39 (LRGEEPAPREGA). The span at 48 to 75 (SCSSSSSCSSFAPSVSSSSSSSPASGSP) shows a compositional bias: low complexity.

The sequence is that of Leucine rich adaptor protein 1-like (Lurap1l) from Rattus norvegicus (Rat).